Consider the following 675-residue polypeptide: MSQVAKKLLVTCALPYANGPIHLGHMLEHIQADIWVRFQRMRGKEVHFICADDAHGTPIMLKAQQMGIAPEEMIATVNQEHHQDFTGFSVSYDNYHSTHSEENQTLSTKIYLELKKNGHIKNRTISQLYDPEKNMFLPDRFVKGSCPKCKAEDQYGDNCEVCGSTYSPTELINPRSAVSGATPEMRETEHFFFDLPAFSDMLQAWTRSGALQEQVANKMQEWFESGLQQWDITRDAPYFGFEIPDAPGKYFYVWLDAPIGYMGSFQNLCDKRGNLNFDEFWAKDSTADLYHFIGKDIVYFHSLFWPAMLEGSGYRKPTNVFVHGYVTVNGAKMSKSRGTFIKASTYLDHLDADCLRYYYAAKLSARIDDIDLNLEDFVQRVNSDIVNKVVNLASRNAGFINKRFNGKLADKLADPALYQQFIDGAKVIAEEFNNREFSKAIREIMALADLANRYVDEQAPWVVAKEEGRDADLQAICSMGINLFRVLMTFLKPVLPSLAERAEAFLNTELTWHGIEQPLLDHQVSAFKALFNRIDMDKVDAMVVASKESINTPQKVSGPLAEDPIQDTITFDDFAKVDMRVALIKQADFVEGSDKLLKLMLDLGGETRQVFSGIRSSYPDPKALEGRLTIMVANLAPRKMRFGISEGMVMAAGPGGKDIFLLSPDSGAQPGMQVK.

Positions 15–25 (PYANGPIHLGH) match the 'HIGH' region motif. Zn(2+)-binding residues include Cys146, Cys149, Cys159, and Cys162. Residues 332–336 (KMSKS) carry the 'KMSKS' region motif. Lys335 serves as a coordination point for ATP. Residues 573–675 (DFAKVDMRVA…SGAQPGMQVK (103 aa)) enclose the tRNA-binding domain.

The protein belongs to the class-I aminoacyl-tRNA synthetase family. MetG type 1 subfamily. As to quaternary structure, homodimer. Zn(2+) serves as cofactor.

Its subcellular location is the cytoplasm. It catalyses the reaction tRNA(Met) + L-methionine + ATP = L-methionyl-tRNA(Met) + AMP + diphosphate. Is required not only for elongation of protein synthesis but also for the initiation of all mRNA translation through initiator tRNA(fMet) aminoacylation. This chain is Methionine--tRNA ligase, found in Photorhabdus laumondii subsp. laumondii (strain DSM 15139 / CIP 105565 / TT01) (Photorhabdus luminescens subsp. laumondii).